We begin with the raw amino-acid sequence, 188 residues long: Ribosomal RNA small subunit methyltransferase G (188 aa).

Residues Gly-69, Phe-74, 119 to 120, and Arg-134 each bind S-adenosyl-L-methionine; that span reads VQ.

This sequence belongs to the methyltransferase superfamily. RNA methyltransferase RsmG family.

The protein resides in the cytoplasm. The catalysed reaction is guanosine(527) in 16S rRNA + S-adenosyl-L-methionine = N(7)-methylguanosine(527) in 16S rRNA + S-adenosyl-L-homocysteine. Functionally, specifically methylates the N7 position of guanine in position 527 of 16S rRNA. This is Ribosomal RNA small subunit methyltransferase G from Campylobacter jejuni subsp. jejuni serotype O:23/36 (strain 81-176).